Reading from the N-terminus, the 211-residue chain is Thiamine-phosphate synthase (211 aa).

4-amino-2-methyl-5-(diphosphooxymethyl)pyrimidine contacts are provided by residues 37-41 and Asn-69; that span reads QLRIK. Asp-70 and Asp-89 together coordinate Mg(2+). Residue Ser-108 coordinates 4-amino-2-methyl-5-(diphosphooxymethyl)pyrimidine. 134–136 provides a ligand contact to 2-[(2R,5Z)-2-carboxy-4-methylthiazol-5(2H)-ylidene]ethyl phosphate; the sequence is TQT. Lys-137 provides a ligand contact to 4-amino-2-methyl-5-(diphosphooxymethyl)pyrimidine. 2-[(2R,5Z)-2-carboxy-4-methylthiazol-5(2H)-ylidene]ethyl phosphate contacts are provided by residues Gly-166 and 186–187; that span reads VS.

It belongs to the thiamine-phosphate synthase family. The cofactor is Mg(2+).

It catalyses the reaction 2-[(2R,5Z)-2-carboxy-4-methylthiazol-5(2H)-ylidene]ethyl phosphate + 4-amino-2-methyl-5-(diphosphooxymethyl)pyrimidine + 2 H(+) = thiamine phosphate + CO2 + diphosphate. It carries out the reaction 2-(2-carboxy-4-methylthiazol-5-yl)ethyl phosphate + 4-amino-2-methyl-5-(diphosphooxymethyl)pyrimidine + 2 H(+) = thiamine phosphate + CO2 + diphosphate. The catalysed reaction is 4-methyl-5-(2-phosphooxyethyl)-thiazole + 4-amino-2-methyl-5-(diphosphooxymethyl)pyrimidine + H(+) = thiamine phosphate + diphosphate. Its pathway is cofactor biosynthesis; thiamine diphosphate biosynthesis; thiamine phosphate from 4-amino-2-methyl-5-diphosphomethylpyrimidine and 4-methyl-5-(2-phosphoethyl)-thiazole: step 1/1. In terms of biological role, condenses 4-methyl-5-(beta-hydroxyethyl)thiazole monophosphate (THZ-P) and 2-methyl-4-amino-5-hydroxymethyl pyrimidine pyrophosphate (HMP-PP) to form thiamine monophosphate (TMP). This is Thiamine-phosphate synthase from Salmonella newport (strain SL254).